Reading from the N-terminus, the 337-residue chain is Glyceraldehyde-3-phosphate dehydrogenase, cytosolic (337 aa).

NAD(+) is bound by residues 13-14 (RI), aspartate 35, and arginine 82. D-glyceraldehyde 3-phosphate is bound by residues 153–155 (SCT), threonine 184, 213–214 (TG), and arginine 236. The Nucleophile role is filled by cysteine 154. Asparagine 318 serves as a coordination point for NAD(+).

Belongs to the glyceraldehyde-3-phosphate dehydrogenase family. Homotetramer.

It is found in the cytoplasm. The catalysed reaction is D-glyceraldehyde 3-phosphate + phosphate + NAD(+) = (2R)-3-phospho-glyceroyl phosphate + NADH + H(+). It functions in the pathway carbohydrate degradation; glycolysis; pyruvate from D-glyceraldehyde 3-phosphate: step 1/5. Functionally, key enzyme in glycolysis that catalyzes the first step of the pathway by converting D-glyceraldehyde 3-phosphate (G3P) into 3-phospho-D-glyceroyl phosphate. Essential for the maintenance of cellular ATP levels and carbohydrate metabolism. This chain is Glyceraldehyde-3-phosphate dehydrogenase, cytosolic (GAPC), found in Antirrhinum majus (Garden snapdragon).